The following is a 396-amino-acid chain: S-arrestin (396 aa).

The protein belongs to the arrestin family.

Arrestin is one of the major proteins of the ros (retinal rod outer segments); it binds to photoactivated-phosphorylated rhodopsin, thereby apparently preventing the transducin-mediated activation of phosphodiesterase. This chain is S-arrestin, found in Aquarana catesbeiana (American bullfrog).